The sequence spans 530 residues: MARLFTPSESKYYLMALDAGTGSIRAVIFDLEGNQIAVGQAEWRHLAVPDVPGSMEFDLNKNWQLACECMRQALHNAGIAPEYIAAVSACSMREGIVLYNNDGTPIWACANVDARAAREVSELKELHNNTFENKVYRATGQTLALSAIPRLLWLAHHRSDIYRQASTITMISDWLAYMLSGELAVDPSNAGTTGLLDLTTRDWKPALLDMAGLRADILSPVKETGTLLGVVSSHAAELCGLKAGTPVVVGGGDVQLGCLGLGVVRPAQTAVLGGTFWQQVVNLAAPVTDPEMNVRVNPHVIPGMVQAESISFFTGLTMRWFRDAFCAEEKLIAERLGIDTYTLLEEMASRVPPGSWGVMPIFSDRMRFKTWYHAAPSFINLSIDPDKCNKATLFRALEENASIVSACNLQQIADFSNIHPTSLVFAGGGSKGKLWSQILADVSGLPVNIPVVKEATALGCAIAAGVGAGIFSSMAETGERLVRWERTHTPDPEKHELYQDSRDKWQAVYQDQLGLVDHGLTTSLWKAPGL.

It belongs to the FGGY kinase family.

The protein localises to the cytoplasm. The enzyme catalyses (S)-4,5-dihydroxypentane-2,3-dione + ATP = (2S)-2-hydroxy-3,4-dioxopentyl phosphate + ADP + H(+). Catalyzes the phosphorylation of autoinducer-2 (AI-2) to phospho-AI-2, which subsequently inactivates the transcriptional regulator LsrR and leads to the transcription of the lsr operon. Phosphorylates the ring-open form of (S)-4,5-dihydroxypentane-2,3-dione (DPD), which is the precursor to all AI-2 signaling molecules, at the C5 position. The sequence is that of Autoinducer-2 kinase from Escherichia coli (strain SMS-3-5 / SECEC).